The sequence spans 605 residues: Progranulin (605 aa).

The first 17 residues, 1-17, serve as a signal peptide directing secretion; it reads MWTLVGWTILVAGLVAG. 2 disulfide bridges follow: Cys126-Cys139 and Cys133-Cys149. Asn197 carries an N-linked (GlcNAc...) asparagine glycan. Disulfide bonds link Cys297/Cys309, Cys303/Cys319, Cys310/Cys327, Cys320/Cys334, Cys328/Cys341, and Cys335/Cys348. The tract at residues 359-386 is disordered; that stretch reads QKTPAQPSRPSQPSPPGPPGPPSPPGPL. Over residues 368 to 385 the composition is skewed to pro residues; the sequence is PSQPSPPGPPGPPSPPGP. Cystine bridges form between Cys392–Cys404 and Cys398–Cys414.

Belongs to the granulin family. In terms of assembly, progranulin is secreted as a homodimer. Interacts with SLPI; interaction protects progranulin from proteolysis. Interacts (via region corresponding to granulin-7 peptide) with CTSD; stabilizes CTSD and increases its proteolytic activity. Interacts (via region corresponding to granulin-7 peptide) with SORT1; this interaction mediates endocytosis and lysosome delivery of progranulin; interaction occurs at the neuronal cell surface in a stressed nervous system. Interacts with PSAP; facilitates lysosomal delivery of progranulin from the extracellular space and the biosynthetic pathway. Forms a complex with PSAP and M6PR; PSAP bridges the binding between progranulin and M6PR. Forms a complex with PSAP and SORT1; progranulin bridges the interaction between PSAP and SORT1; facilitates lysosomal targeting of PSAP via SORT1; interaction enhances PSAP uptake in primary cortical neurons. Interacts (via regions corresponding to granulin-2 and granulin-7 peptides) with GBA1; this interaction prevents aggregation of GBA1-SCARB2 complex via interaction with HSPA1A upon stress. Interacts (via region corresponding to granulin-7 peptide) with HSPA1A; mediates recruitment of HSPA1A to GBA1 and prevents GBA1 aggregation in response to stress. In terms of processing, cleaved by ELANE; proteolysis is blocked by SLPI and is concentration- and time-dependent and induces CXCL8/IL-8 production; granulin-3 and granulin-4 are resistant to ELANE. Cleaved by CTSL in lysosome thus regulating the maturation and turnover of progranulin within the lysosome.

Its subcellular location is the secreted. The protein localises to the lysosome. Functionally, secreted protein that acts as a key regulator of lysosomal function and as a growth factor involved in inflammation, wound healing and cell proliferation. Regulates protein trafficking to lysosomes, and also the activity of lysosomal enzymes. Also facilitates the acidification of lysosomes, causing degradation of mature CTSD by CTSB. In addition, functions as a wound-related growth factor that acts directly on dermal fibroblasts and endothelial cells to promote division, migration and the formation of capillary-like tubule structures. Also promotes epithelial cell proliferation by blocking TNF-mediated neutrophil activation preventing release of oxidants and proteases. Moreover, modulates inflammation in neurons by preserving neurons survival, axonal outgrowth and neuronal integrity. In terms of biological role, inhibits epithelial cell proliferation and induces epithelial cells to secrete IL-8. Its function is as follows. Stabilizes CTSD through interaction with CTSD leading to maintain its aspartic-type peptidase activity. The protein is Progranulin (GRN) of Cavia porcellus (Guinea pig).